Here is a 106-residue protein sequence, read N- to C-terminus: Tapetal oleosin GRP-19 (106 aa).

3 consecutive transmembrane segments (helical) span residues 14–34 (ALAL…ACII), 37–57 (PLFV…TLLA), and 58–78 (SGFT…SWLY). Positions 84–106 (RDLPKIPGLTPPAPASNPAGSGV) are disordered.

Belongs to the oleosin family. In terms of processing, proteolytically cleaved following anther tapetal breakdown. Present in pollen (at protein level). Inflorescence-specific expression, especially in flowers florets.

It localises to the secreted. The protein resides in the extracellular space. Its subcellular location is the extracellular matrix. It is found in the pollen coat. The protein localises to the lipid droplet. It localises to the membrane. Its function is as follows. Lipid-binding oleosin involved in anther tapetum development, especially for the physiology of tapetosomes. Also implicated in the formation of pollen coat. This chain is Tapetal oleosin GRP-19, found in Arabidopsis thaliana (Mouse-ear cress).